Reading from the N-terminus, the 710-residue chain is Exocyst complex component 5 (710 aa).

Residues 44-96 are a coiled coil; it reads DTFIQTIKDLKILQEKQQSKCERLEESLRQEKESHAKKIAKLQERHQTAIDVF.

Belongs to the SEC10 family. In terms of assembly, the exocyst complex is composed of Sec3/Exoc1, Sec5/Exoc2, Sec6/Exoc3, Sec8/Exoc4, Sec10/Exoc5, Sec15/Exoc6, Exo70/Exoc7 and Exo84/Exoc8.

Its function is as follows. Component of the exocyst complex involved in the docking of exocytic vesicles with fusion sites on the plasma membrane. This chain is Exocyst complex component 5, found in Drosophila melanogaster (Fruit fly).